A 331-amino-acid chain; its full sequence is DSC E3 ubiquitin ligase complex subunit D (331 aa).

Residue N26 is glycosylated (N-linked (GlcNAc...) asparagine). The next 3 membrane-spanning stretches (helical) occupy residues 63–83 (ILIYCELSALYYMDCSVILFA), 107–127 (PFIGAIFVSNIFCMIFHNFFT), and 159–179 (LFLLDFLVLILDLVMLGLIVE). Residues 197 to 214 (VQDHDSEERGVHRTRPES) are compositionally biased toward basic and acidic residues. Residues 197–225 (VQDHDSEERGVHRTRPESRSSVVGAELDE) form a disordered region.

Component of the DSC E3 ubiquitin ligase complex composed of dscA, dscB, dscC and dscD.

It is found in the endoplasmic reticulum membrane. Its pathway is protein modification; protein ubiquitination. Component of the DSC E3 ubiquitin ligase complex which is required for the srbA transcriptional activator proteolytic cleavage to release the soluble transcription factor from the membrane in low oxygen or sterol conditions. Required for growth during hypoxia and triazole drug susceptibility, as well as for virulence in a murine model of invasive pulmonary aspergillosis (IPA). The chain is DSC E3 ubiquitin ligase complex subunit D from Aspergillus fumigatus (strain CBS 144.89 / FGSC A1163 / CEA10) (Neosartorya fumigata).